Reading from the N-terminus, the 530-residue chain is C2H2-type transcription factor MSN2 (530 aa).

2 consecutive C2H2-type zinc fingers follow at residues 409-432 (FVCD…RSLH) and 438-460 (FECN…ARTH).

The protein localises to the nucleus. It localises to the cytoplasm. Its function is as follows. Transcription factor that acts as a key downstream transcription factor in the HOG1-MAPK pathway. Plays crucial roles in the regulation of conidiation, virulence and multi-stress responses. In addition to regulating the expression of genes specifically involved in stress-response, conidiation and virulence, controls also expression of cellular signaling factors. This is C2H2-type transcription factor MSN2 from Metarhizium robertsii (strain ARSEF 23 / ATCC MYA-3075) (Metarhizium anisopliae (strain ARSEF 23)).